A 130-amino-acid chain; its full sequence is ATP synthase epsilon chain (130 aa).

The protein belongs to the ATPase epsilon chain family. As to quaternary structure, F-type ATPases have 2 components, CF(1) - the catalytic core - and CF(0) - the membrane proton channel. CF(1) has five subunits: alpha(3), beta(3), gamma(1), delta(1), epsilon(1). CF(0) has three main subunits: a, b and c.

The protein resides in the cell inner membrane. Produces ATP from ADP in the presence of a proton gradient across the membrane. The chain is ATP synthase epsilon chain from Sulfurimonas denitrificans (strain ATCC 33889 / DSM 1251) (Thiomicrospira denitrificans (strain ATCC 33889 / DSM 1251)).